Here is a 497-residue protein sequence, read N- to C-terminus: Squalene monooxygenase (497 aa).

FAD is bound by residues 29-30 (VV), 49-50 (ER), Arg-57, Arg-159, Val-175, Asp-336, and Met-349. 2 helical membrane-spanning segments follow: residues 434 to 454 (FLSG…TVAL) and 467 to 487 (LGFL…AKVF).

It belongs to the squalene monooxygenase family. FAD is required as a cofactor.

The protein localises to the microsome membrane. Its subcellular location is the endoplasmic reticulum membrane. It catalyses the reaction squalene + reduced [NADPH--hemoprotein reductase] + O2 = (S)-2,3-epoxysqualene + oxidized [NADPH--hemoprotein reductase] + H2O + H(+). It functions in the pathway terpene metabolism; lanosterol biosynthesis; lanosterol from farnesyl diphosphate: step 2/3. Functionally, catalyzes the stereospecific oxidation of squalene to (S)-2,3-epoxysqualene, and is considered to be a rate-limiting enzyme in steroid biosynthesis. The protein is Squalene monooxygenase (ERG1) of Eremothecium gossypii (strain ATCC 10895 / CBS 109.51 / FGSC 9923 / NRRL Y-1056) (Yeast).